Here is a 172-residue protein sequence, read N- to C-terminus: Xanthine-guanine phosphoribosyltransferase (172 aa).

Residues 47–48 and 106–114 contribute to the 5-phospho-alpha-D-ribose 1-diphosphate site; these read RG and DDLVDTGKT. Aspartate 107 serves as a coordination point for Mg(2+). Guanine contacts are provided by aspartate 110 and isoleucine 153. Xanthine is bound by residues aspartate 110 and isoleucine 153. GMP-binding positions include 110 to 114 and 152 to 153; these read DTGKT and WI.

Belongs to the purine/pyrimidine phosphoribosyltransferase family. XGPT subfamily. Homotetramer. Mg(2+) serves as cofactor.

Its subcellular location is the cell inner membrane. It catalyses the reaction GMP + diphosphate = guanine + 5-phospho-alpha-D-ribose 1-diphosphate. It carries out the reaction XMP + diphosphate = xanthine + 5-phospho-alpha-D-ribose 1-diphosphate. The enzyme catalyses IMP + diphosphate = hypoxanthine + 5-phospho-alpha-D-ribose 1-diphosphate. The protein operates within purine metabolism; GMP biosynthesis via salvage pathway; GMP from guanine: step 1/1. Its pathway is purine metabolism; XMP biosynthesis via salvage pathway; XMP from xanthine: step 1/1. Functionally, purine salvage pathway enzyme that catalyzes the transfer of the ribosyl-5-phosphate group from 5-phospho-alpha-D-ribose 1-diphosphate (PRPP) to the N9 position of the 6-oxopurines guanine and xanthine to form the corresponding ribonucleotides GMP (guanosine 5'-monophosphate) and XMP (xanthosine 5'-monophosphate), with the release of PPi. To a lesser extent, also acts on hypoxanthine. The chain is Xanthine-guanine phosphoribosyltransferase from Rhodopseudomonas palustris (strain BisB5).